The primary structure comprises 73 residues: MSKKKDVIEMEGTITEPLPNAMFRVKLENGHEVLAHISGRMRMNYIRILKGDRVLVELSPYDLTRGRITYRYK.

The S1-like domain occupies 1–73 (MSKKKDVIEM…TRGRITYRYK (73 aa)).

Belongs to the IF-1 family. As to quaternary structure, component of the 30S ribosomal translation pre-initiation complex which assembles on the 30S ribosome in the order IF-2 and IF-3, IF-1 and N-formylmethionyl-tRNA(fMet); mRNA recruitment can occur at any time during PIC assembly.

The protein resides in the cytoplasm. One of the essential components for the initiation of protein synthesis. Stabilizes the binding of IF-2 and IF-3 on the 30S subunit to which N-formylmethionyl-tRNA(fMet) subsequently binds. Helps modulate mRNA selection, yielding the 30S pre-initiation complex (PIC). Upon addition of the 50S ribosomal subunit IF-1, IF-2 and IF-3 are released leaving the mature 70S translation initiation complex. This chain is Translation initiation factor IF-1, found in Roseiflexus castenholzii (strain DSM 13941 / HLO8).